A 293-amino-acid polypeptide reads, in one-letter code: 4-diphosphocytidyl-2-C-methyl-D-erythritol kinase (293 aa).

Residue Lys11 is part of the active site. 96–106 (PVAAGLGGGSS) is a binding site for ATP. Asp138 is a catalytic residue.

This sequence belongs to the GHMP kinase family. IspE subfamily.

It carries out the reaction 4-CDP-2-C-methyl-D-erythritol + ATP = 4-CDP-2-C-methyl-D-erythritol 2-phosphate + ADP + H(+). The protein operates within isoprenoid biosynthesis; isopentenyl diphosphate biosynthesis via DXP pathway; isopentenyl diphosphate from 1-deoxy-D-xylulose 5-phosphate: step 3/6. In terms of biological role, catalyzes the phosphorylation of the position 2 hydroxy group of 4-diphosphocytidyl-2C-methyl-D-erythritol. This Xanthobacter autotrophicus (strain ATCC BAA-1158 / Py2) protein is 4-diphosphocytidyl-2-C-methyl-D-erythritol kinase.